We begin with the raw amino-acid sequence, 309 residues long: Homoserine kinase (309 aa).

Residue 91-101 (PIGSGLGSSAC) coordinates ATP.

The protein belongs to the GHMP kinase family. Homoserine kinase subfamily.

It is found in the cytoplasm. The catalysed reaction is L-homoserine + ATP = O-phospho-L-homoserine + ADP + H(+). It functions in the pathway amino-acid biosynthesis; L-threonine biosynthesis; L-threonine from L-aspartate: step 4/5. Its function is as follows. Catalyzes the ATP-dependent phosphorylation of L-homoserine to L-homoserine phosphate. This chain is Homoserine kinase, found in Salmonella paratyphi B (strain ATCC BAA-1250 / SPB7).